The primary structure comprises 531 residues: Na(+)/H(+) antiporter NhaB (531 aa).

12 helical membrane-spanning segments follow: residues 13 to 33 (FLGK…IINP), 34 to 54 (LVFF…EFIF), 90 to 110 (LVAN…IYFM), 121 to 141 (ILIG…TAAF), 145 to 165 (FLDA…FYAI), 206 to 226 (LLMH…VGEP), 242 to 262 (FIIR…LTCV), 308 to 328 (VIAV…GLIG), 352 to 372 (EEAL…AVII), 394 to 414 (LALF…VFVG), 456 to 476 (GQAA…QLSY), and 482 to 502 (MALP…SFLL).

Belongs to the NhaB Na(+)/H(+) (TC 2.A.34) antiporter family.

The protein resides in the cell inner membrane. The enzyme catalyses 2 Na(+)(in) + 3 H(+)(out) = 2 Na(+)(out) + 3 H(+)(in). Functionally, na(+)/H(+) antiporter that extrudes sodium in exchange for external protons. This is Na(+)/H(+) antiporter NhaB from Aliivibrio salmonicida (strain LFI1238) (Vibrio salmonicida (strain LFI1238)).